Reading from the N-terminus, the 20-residue chain is Cytochrome c oxidase subunit 5A-1, mitochondrial (20 aa).

It belongs to the cytochrome c oxidase subunit 5A family. In terms of assembly, component of the cytochrome c oxidase (complex IV, CIV), a multisubunit enzyme composed of 14 subunits. The complex is composed of a catalytic core of 3 subunits MT-CO1, MT-CO2 and MT-CO3, encoded in the mitochondrial DNA, and 11 supernumerary subunits COX4I, COX5A, COX5B, COX6A, COX6B, COX6C, COX7A, COX7B, COX7C, COX8 and NDUFA4, which are encoded in the nuclear genome. The complex exists as a monomer or a dimer and forms supercomplexes (SCs) in the inner mitochondrial membrane with NADH-ubiquinone oxidoreductase (complex I, CI) and ubiquinol-cytochrome c oxidoreductase (cytochrome b-c1 complex, complex III, CIII), resulting in different assemblies (supercomplex SCI(1)III(2)IV(1) and megacomplex MCI(2)III(2)IV(2)). Interacts with AFG1L. Interacts with RAB5IF.

It localises to the mitochondrion inner membrane. It participates in energy metabolism; oxidative phosphorylation. Its function is as follows. Component of the cytochrome c oxidase, the last enzyme in the mitochondrial electron transport chain which drives oxidative phosphorylation. The respiratory chain contains 3 multisubunit complexes succinate dehydrogenase (complex II, CII), ubiquinol-cytochrome c oxidoreductase (cytochrome b-c1 complex, complex III, CIII) and cytochrome c oxidase (complex IV, CIV), that cooperate to transfer electrons derived from NADH and succinate to molecular oxygen, creating an electrochemical gradient over the inner membrane that drives transmembrane transport and the ATP synthase. Cytochrome c oxidase is the component of the respiratory chain that catalyzes the reduction of oxygen to water. Electrons originating from reduced cytochrome c in the intermembrane space (IMS) are transferred via the dinuclear copper A center (CU(A)) of subunit 2 and heme A of subunit 1 to the active site in subunit 1, a binuclear center (BNC) formed by heme A3 and copper B (CU(B)). The BNC reduces molecular oxygen to 2 water molecules using 4 electrons from cytochrome c in the IMS and 4 protons from the mitochondrial matrix. This Thunnus obesus (Bigeye tuna) protein is Cytochrome c oxidase subunit 5A-1, mitochondrial.